Consider the following 144-residue polypeptide: MPRSPAKTSPRKGSPRKGSPSRKASPKRGGKGAKRAGKGGRRRRVVKRRRRRRESYGIYIYKVLKQVHPDTGISSRAMSVMNSFVNDVFERIAGEASRLTSANRRSTVSSREIQTAVRLLLPGELAKHAVSEGTKAVTKYTTSR.

Residues 1–51 are disordered; the sequence is MPRSPAKTSPRKGSPRKGSPSRKASPKRGGKGAKRAGKGGRRRRVVKRRRR. 5 short sequence motifs (SPKK motif) span residues 4–7, 9–12, 14–17, 19–22, and 25–28; these read SPAK, SPRK, SPSR, and SPKR. Phosphoserine occurs at positions 14, 19, and 25. The span at 24–51 shows a compositional bias: basic residues; that stretch reads ASPKRGGKGAKRAGKGGRRRRVVKRRRR. O-linked (GlcNAc) serine glycosylation is present at Ser131. A Glycyl lysine isopeptide (Lys-Gly) (interchain with G-Cter in ubiquitin) cross-link involves residue Lys139.

The protein belongs to the histone H2B family. The nucleosome is a histone octamer containing two molecules each of H2A, H2B, H3 and H4 assembled in one H3-H4 heterotetramer and two H2A-H2B heterodimers. The octamer wraps approximately 147 bp of DNA. Post-translationally, monoubiquitination of Lys-139 gives a specific tag for epigenetic transcriptional activation and is also prerequisite for histone H3 'Lys-4' and 'Lys-79' methylation. In terms of processing, phosphorylated on SPKK motifs 3, 4 and 5; which may regulate DNA binding. Dephosphorylated during maturation of spermatids to mature sperm and rephosphorylated at fertilization.

The protein localises to the nucleus. It localises to the chromosome. Functionally, core component of nucleosome. Nucleosomes wrap and compact DNA into chromatin, limiting DNA accessibility to the cellular machineries which require DNA as a template. Histones thereby play a central role in transcription regulation, DNA repair, DNA replication and chromosomal stability. DNA accessibility is regulated via a complex set of post-translational modifications of histones, also called histone code, and nucleosome remodeling. This is Histone H2B.2, sperm from Parechinus angulosus (Angulate sea urchin).